We begin with the raw amino-acid sequence, 1394 residues long: Adhesion and penetration protein autotransporter (1394 aa).

The signal sequence occupies residues 1–25; that stretch reads MKKTVFRLNFLTACISLGIVSQAWA. One can recognise a Peptidase S6 domain in the interval 26–286; sequence GHTYFGIDYQ…QLVRKSYFDE (261 aa). The active site involves Ser243. 2 disordered regions span residues 848–870 and 995–1027; these read AYSA…TPTS and TLEA…FPDT. An Autotransporter domain is found at 1140-1394; it reads VDQAQSAVWT…NVGVKLGYRW (255 aa).

It localises to the periplasm. Its subcellular location is the secreted. It is found in the cell surface. The protein localises to the cell outer membrane. Its function is as follows. Probable protease; promotes adherence and invasion by directly binding to a host cell structure. The polypeptide is Adhesion and penetration protein autotransporter (hap) (Haemophilus influenzae).